Here is a 564-residue protein sequence, read N- to C-terminus: MIDLTAAPFSLDDDGIAWVRTTLAEMGEDEKLGQLFCLITYTSDPEYLGYLTRGLHVGGVMLRTMTAADAAATVTTLQSTATVPLLISANLEGGASQTVQEATHVGSNMALAATGSTDHVRRAATVIGREARALGINWAFTPVVDIDLNFRNPITNTRTFGADAATVAAMGAEYVEAIQAQGLAASAKHFPGDGVDERDQHLLASVNTMSVEEWDDSFGVVYRAAIAAGVKTVMVGHIMLPAYSRALRPGVADRDILPGVVAEELLNDLLRDRLGFNGLVVSDSTTMAGLASVLPRSQAVPRVIAAGCDMFLFTKNLDEDFGYMRAGIRDGVITPERLDEAVTRILALKASLGLHRGTNLPAQGAAGVLADPDHSATAREVAASSITLVKEEPGVLPITRERYPRVLVYDLQNGGSPIGQGARAGAVEQFVDALVEAGHDVTRFEPGGGWEGMAAPTTDVTERHDLVLYLANLSTRSNQTVVRIEWAEPMGANVPAYVHSVPTVFVSFENPYHLFDVPRVRTLINTYGSSPVVLETLLAALQGKAPFAGSSPVDAFCGQWDTHL.

Asp283 acts as the Nucleophile in catalysis.

This sequence belongs to the glycosyl hydrolase 3 family.

The enzyme catalyses Hydrolysis of terminal non-reducing N-acetyl-D-hexosamine residues in N-acetyl-beta-D-hexosaminides.. It catalyses the reaction Hydrolysis of terminal, non-reducing beta-D-glucosyl residues with release of beta-D-glucose.. Functionally, catalyzes the cleavage of beta-N-acetyl-D-glucosaminides and beta-D-glucosides. Might be involved in the degradation of glucuronic acid-containing glycosaminoglycans such as hyaluronic acid. This is Beta-N-acetylglucosaminidase/beta-glucosidase (nag3) from Cellulomonas fimi.